The chain runs to 429 residues: MAKIVDIKGREVLDSRGNPTVEADVLLDNGIIGSACAPSGASTGSREALELRDGDKSRYLGKGVLKAVANINGPIRDLLLGKDPSDQKALDRAMIELDGTENKAKLGANAILAVSLAAAKAAAQDQDLPLYAHIANLNGTPGQYSMPVPMMNIINGGEHADNNVDIQEFMVQPVGAKTFSDGLRMGTEIFHHLKAVLKARGLNTAVGDEGGFAPNLASNEDALGAIAEAVEKAGYKLGTDVTLALDCAASEFYEDGKYNLSGEGKSFDAEGFADYLKGLTERFPIISIEDGLDESDWAGWKILTDKIGEKVQLVGDDLFVTNTKILKEGIEKGIGNSILIKFNQIGSLTETLEAIQMAKAAGYTAVISHRSGETEDSTIADLAVGTAAGQIKTGSLCRSDRVSKYNQLLRIEEQLGAKAVYRGRAEFRG.

Gln-167 is a (2R)-2-phosphoglycerate binding site. The active-site Proton donor is the Glu-209. Mg(2+) is bound by residues Asp-246, Glu-289, and Asp-316. Lys-341, Arg-370, Ser-371, and Lys-392 together coordinate (2R)-2-phosphoglycerate. The Proton acceptor role is filled by Lys-341.

The protein belongs to the enolase family. As to quaternary structure, component of the RNA degradosome, a multiprotein complex involved in RNA processing and mRNA degradation. It depends on Mg(2+) as a cofactor.

Its subcellular location is the cytoplasm. It is found in the secreted. The protein localises to the cell surface. It carries out the reaction (2R)-2-phosphoglycerate = phosphoenolpyruvate + H2O. Its pathway is carbohydrate degradation; glycolysis; pyruvate from D-glyceraldehyde 3-phosphate: step 4/5. Catalyzes the reversible conversion of 2-phosphoglycerate (2-PG) into phosphoenolpyruvate (PEP). It is essential for the degradation of carbohydrates via glycolysis. This chain is Enolase, found in Pseudomonas putida (strain ATCC 47054 / DSM 6125 / CFBP 8728 / NCIMB 11950 / KT2440).